Reading from the N-terminus, the 416-residue chain is Hemagglutinin-esterase (416 aa).

Positions 1-14 (MLSLILFFPSFAFA) are cleaved as a signal peptide. The segment at 4-121 (LILFFPSFAF…GVDSYMELKT (118 aa)) is esterase domain first part. Topologically, residues 15 to 393 (VTPVTPYFGP…ESVDVISSSY (379 aa)) are virion surface. Ser37 functions as the Nucleophile in the catalytic mechanism. A disulfide bridge links Cys41 with Cys57. Residues Asn59 and Asn76 are each glycosylated (N-linked (GlcNAc...) asparagine; by host). Cystine bridges form between Cys88–Cys136, Cys108–Cys156, Cys192–Cys273, Cys200–Cys246, and Cys206–Cys213. The segment at 122–263 (SFNIKLNQMA…GTHNASIVGN (142 aa)) is receptor binding. Residues Asn257, Asn278, and Asn294 are each glycosylated (N-linked (GlcNAc...) asparagine; by host). Residues 264–379 (FLFYPTKSYC…SCPQYVKLFD (116 aa)) form an esterase domain second part region. A disulfide bridge connects residues Cys304 and Cys309. Asn322 carries an N-linked (GlcNAc...) asparagine; by host glycan. The Charge relay system role is filled by His328. A glycan (N-linked (GlcNAc...) asparagine; by host) is linked at Asn343. An intrachain disulfide couples Cys346 to Cys371. Residues 394–414 (FVATWVLLVVVVILIFVIISF) form a helical membrane-spanning segment. The Intravirion segment spans residues 415–416 (FC).

The protein belongs to the influenza type C/coronaviruses hemagglutinin-esterase family. In terms of assembly, homodimer. In terms of processing, N-glycosylated.

It localises to the virion membrane. The protein resides in the host cell membrane. It carries out the reaction N-acetyl-9-O-acetylneuraminate + H2O = N-acetylneuraminate + acetate + H(+). It catalyses the reaction N-acetyl-4-O-acetylneuraminate + H2O = N-acetylneuraminate + acetate + H(+). In terms of biological role, structural protein that makes short spikes at the surface of the virus. Contains receptor binding and receptor-destroying activities. Mediates de-O-acetylation of N-acetyl-9-O-acetylneuraminic acid, which is probably the receptor determinant recognized by the virus on the surface of erythrocytes and susceptible cells. This receptor-destroying activity is important for virus release as it probably helps preventing self-aggregation and ensures the efficient spread of the progeny virus from cell to cell. May serve as a secondary viral attachment protein for initiating infection, the spike protein being the major one. Seems to be a 'luxury' protein that is not absolutely necessary for virus infection in culture. However, its presence in the virus may alter its pathogenicity. May become a target for both the humoral and the cellular branches of the immune system. This chain is Hemagglutinin-esterase (HE), found in Homo sapiens (Human).